The primary structure comprises 807 residues: 85/88 kDa calcium-independent phospholipase A2 (807 aa).

Ser-13 carries the post-translational modification Phosphoserine. 9 ANK repeats span residues 120 to 147 (WTVTHLAVELGIRECFHHSRIISCANST), 151 to 181 (EGCTPLHLACRKGDSEILVELVQYCHAQMDV), 185 to 215 (KGETAFHYAVQGDNPQVLQLLGKNASAGLNQ), 219 to 248 (QGLTPLHLACKMGKQEMVRVLLLCNARCNI), 251 to 281 (PGGFPIHTAMKFSQKGCAEMIISMDSNQIHS), 286 to 312 (YGASPLHWAKNAEMARMLLKRGCDVDS), 316 to 345 (SGNTALHVAVMRNRFDCVMVLLTYGANAGA), 349 to 378 (HGNTPLHLAMSKDNMEMVKALIVFGAEVDT), and 382 to 403 (FGETPALIASKISKLITRKALL). 2 helical membrane-spanning segments follow: residues 481-501 (LLCLDGGGVKGLVIIQLLIAI) and 512-532 (LFDWVAGTSTGGILALAILHS). The region spanning 482 to 666 (LCLDGGGVKG…LANNPTLDAM (185 aa)) is the PNPLA domain. The GXGXXG motif lies at 486–491 (GGGVKG). Residues 518-522 (GTSTG) carry the GXSXG motif. Ser-520 serves as the catalytic Nucleophile. Asp-653 serves as the catalytic Proton acceptor. The short motif at 653–655 (DGG) is the DGA/G element. A calmodulin-binding (1-9-14 motif) region spans residues 678-687 (RKGQGNKVKK). The tract at residues 749 to 760 (AWCEMVGIQYFR) is calmodulin-binding (IQ motif).

In terms of assembly, homodimer formed by catalytic domains tightly interacting through a large hydrophobic interface. The contact area involves 3 alpha helices, several loops and a part of the beta sheet from each monomer. Both active sites of the dimer are in close proximity adopting an open conformation that provide sufficient space for phospholipid access and favoring cooperativity in deacylation-reacylation reactions. Each monomer has 9 ankyrin repeats stacked side-by-side in an elongated structure oriented outwards from the catalytic core. As to expression, expressed in neurons of central and peripheral nervous system. Highly expressed in Purkinje cells in cerebellum and dorsal and ventral horn neurons in the spinal cord. Expressed in testis (at protein level). Expressed in skeletal muscle (at protein level).

The protein resides in the cytoplasm. Its subcellular location is the cell membrane. The protein localises to the mitochondrion. It localises to the cell projection. It is found in the pseudopodium. The catalysed reaction is a 1,2-diacyl-sn-glycero-3-phosphocholine + H2O = a 1-acyl-sn-glycero-3-phosphocholine + a fatty acid + H(+). It catalyses the reaction a 1-O-alkyl-2-acyl-sn-glycero-3-phosphocholine + H2O = a 1-O-alkyl-sn-glycero-3-phosphocholine + a fatty acid + H(+). The enzyme catalyses 1,2-dihexadecanoyl-sn-glycero-3-phosphocholine + H2O = 1-hexadecanoyl-sn-glycero-3-phosphocholine + hexadecanoate + H(+). It carries out the reaction 1-hexadecanoyl-2-(9Z-octadecenoyl)-sn-glycero-3-phosphocholine + H2O = 1-hexadecanoyl-sn-glycero-3-phosphocholine + (9Z)-octadecenoate + H(+). The catalysed reaction is 1-hexadecanoyl-2-(9Z,12Z-octadecadienoyl)-sn-glycero-3-phosphocholine + H2O = (9Z,12Z)-octadecadienoate + 1-hexadecanoyl-sn-glycero-3-phosphocholine + H(+). It catalyses the reaction 1-hexadecanoyl-2-(5Z,8Z,11Z,14Z-eicosatetraenoyl)-sn-glycero-3-phosphocholine + H2O = 1-hexadecanoyl-sn-glycero-3-phosphocholine + (5Z,8Z,11Z,14Z)-eicosatetraenoate + H(+). The enzyme catalyses 1-octadecanoyl-2-(5Z,8Z,11Z,14Z-eicosatetraenoyl)-sn-glycero-3-phosphocholine + H2O = 1-octadecanoyl-sn-glycero-3-phosphocholine + (5Z,8Z,11Z,14Z)-eicosatetraenoate + H(+). It carries out the reaction 1-hexadecanoyl-2-(5Z,8Z,11Z,14Z-eicosatetraenoyl)-sn-glycero-3-phosphoethanolamine + H2O = 1-hexadecanoyl-sn-glycero-3-phosphoethanolamine + (5Z,8Z,11Z,14Z)-eicosatetraenoate + H(+). The catalysed reaction is 1,2-dihexadecanoyl-sn-glycero-3-phosphate + H2O = 1-hexadecanoyl-sn-glycero-3-phosphate + hexadecanoate + H(+). It catalyses the reaction a 1-acyl-sn-glycero-3-phosphocholine + H2O = sn-glycerol 3-phosphocholine + a fatty acid + H(+). The enzyme catalyses 1-hexadecanoyl-sn-glycero-3-phosphocholine + H2O = sn-glycerol 3-phosphocholine + hexadecanoate + H(+). It carries out the reaction 1-(5Z,8Z,11Z,14Z-eicosatetraenoyl)-sn-glycero-3-phosphocholine + H2O = sn-glycerol 3-phosphocholine + (5Z,8Z,11Z,14Z)-eicosatetraenoate + H(+). The catalysed reaction is 2-(5Z,8Z,11Z,14Z)-eicosatetraenoyl-sn-glycero-3-phosphocholine + H2O = sn-glycerol 3-phosphocholine + (5Z,8Z,11Z,14Z)-eicosatetraenoate + H(+). It catalyses the reaction 1-O-hexadecyl-2-(5Z,8Z,11Z,14Z)-eicosatetraenoyl-sn-glycero-3-phosphocholine + H2O = 1-O-hexadecyl-sn-glycero-3-phosphocholine + (5Z,8Z,11Z,14Z)-eicosatetraenoate + H(+). The enzyme catalyses 1-O-hexadecyl-2-acetyl-sn-glycero-3-phosphocholine + H2O = 1-O-hexadecyl-sn-glycero-3-phosphocholine + acetate + H(+). It carries out the reaction hexadecanoyl-CoA + H2O = hexadecanoate + CoA + H(+). The catalysed reaction is 1',3'-bis[1,2-di-(9Z-octadecenoyl)-sn-glycero-3-phospho]-glycerol + H2O = 1'-[1,2-di-(9Z-octadecenoyl)-sn-glycero-3-phospho]-3'-[1-(9Z-octadecenoyl)-sn-glycero-3-phospho]-glycerol + (9Z)-octadecenoate + H(+). It catalyses the reaction 1'-[1,2-di-(9Z-octadecenoyl)-sn-glycero-3-phospho]-3'-[1-(9Z-octadecenoyl)-sn-glycero-3-phospho]-glycerol + H2O = 1',3'-bis-[1-(9Z-octadecenoyl)-sn-glycero-3-phospho]-glycerol + (9Z)-octadecenoate + H(+). The enzyme catalyses 1',3'-bis-[1,2-di-(9Z,12Z-octadecadienoyl)-sn-glycero-3-phospho]-glycerol + H2O = 1'-[1,2-di-(9Z,12Z-octadecadienoyl)-sn-glycero-3-phospho]-3'-[1-(9Z,12Z-octadecadienoyl)-sn-glycero-3-phospho]-glycerol + (9Z,12Z)-octadecadienoate + H(+). It carries out the reaction 1-octadecanoyl-2-(15-hydroxy-(5Z,8Z,11Z,13E)-eicosatetraenoyl)-sn-glycero-3-phosphoethanolamine + H2O = 1-octadecanoyl-sn-glycero-3-phosphoethanolamine + 15-hydroxy-(5Z,8Z,11Z,13E)-eicosatetraenoate + H(+). With respect to regulation, inhibited by calcium-activated calmodulin. Activated by ATP. Inhibited by bromoenol lactone (BEL). Functionally, calcium-independent phospholipase involved in phospholipid remodeling with implications in cellular membrane homeostasis, mitochondrial integrity and signal transduction. Hydrolyzes the ester bond of the fatty acyl group attached at sn-1 or sn-2 position of phospholipids (phospholipase A1 and A2 activity respectively), producing lysophospholipids that are used in deacylation-reacylation cycles. Hydrolyzes both saturated and unsaturated long fatty acyl chains in various glycerophospholipid classes such as phosphatidylcholines, phosphatidylethanolamines and phosphatidates, with a preference for hydrolysis at sn-2 position. Can further hydrolyze lysophospholipids carrying saturated fatty acyl chains (lysophospholipase activity). Upon oxidative stress, contributes to remodeling of mitochondrial phospholipids in pancreatic beta cells, in a repair mechanism to reduce oxidized lipid content. Preferentially hydrolyzes oxidized polyunsaturated fatty acyl chains from cardiolipins, yielding monolysocardiolipins that can be reacylated with unoxidized fatty acyls to regenerate native cardiolipin species. Hydrolyzes oxidized glycerophosphoethanolamines present in pancreatic islets, releasing oxidized polyunsaturated fatty acids such as hydroxyeicosatetraenoates (HETEs). Has thioesterase activity toward fatty-acyl CoA releasing CoA-SH known to facilitate fatty acid transport and beta-oxidation in mitochondria particularly in skeletal muscle. Plays a role in regulation of membrane dynamics and homeostasis. Selectively hydrolyzes sn-2 arachidonoyl group in plasmalogen phospholipids, structural components of lipid rafts and myelin. Regulates F-actin polymerization at the pseudopods, which is required for both speed and directionality of MCP1/CCL2-induced monocyte chemotaxis. Targets membrane phospholipids to produce potent lipid signaling messengers. Generates lysophosphatidate (LPA, 1-acyl-glycerol-3-phosphate), which acts via G-protein receptors in various cell types. Has phospholipase A2 activity toward platelet-activating factor (PAF, 1-O-alkyl-2-acetyl-sn-glycero-3-phosphocholine), likely playing a role in inactivation of this potent pro-inflammatory signaling lipid. In response to glucose, amplifies calcium influx in pancreatic beta cells to promote INS secretion. In Mus musculus (Mouse), this protein is 85/88 kDa calcium-independent phospholipase A2 (Pla2g6).